The following is a 171-amino-acid chain: 3-hydroxydecanoyl-[acyl-carrier-protein] dehydratase (171 aa).

Residue histidine 70 is part of the active site.

The protein belongs to the thioester dehydratase family. FabA subfamily. As to quaternary structure, homodimer.

It is found in the cytoplasm. The enzyme catalyses a (3R)-hydroxyacyl-[ACP] = a (2E)-enoyl-[ACP] + H2O. It carries out the reaction (3R)-hydroxydecanoyl-[ACP] = (2E)-decenoyl-[ACP] + H2O. The catalysed reaction is (2E)-decenoyl-[ACP] = (3Z)-decenoyl-[ACP]. It participates in lipid metabolism; fatty acid biosynthesis. Necessary for the introduction of cis unsaturation into fatty acids. Catalyzes the dehydration of (3R)-3-hydroxydecanoyl-ACP to E-(2)-decenoyl-ACP and then its isomerization to Z-(3)-decenoyl-ACP. Can catalyze the dehydratase reaction for beta-hydroxyacyl-ACPs with saturated chain lengths up to 16:0, being most active on intermediate chain length. This is 3-hydroxydecanoyl-[acyl-carrier-protein] dehydratase from Shewanella halifaxensis (strain HAW-EB4).